We begin with the raw amino-acid sequence, 589 residues long: MNVLSGAMRYATPWRTYRRLLSYAREYRWLLVVAACGALLEAVAGSTFLALMKPITNETFIERNREVALWLPLGIVGLFLLRGIAGYITDMAMGRAARSIARDFRVCVLTKYFRLPGSRFDGEPVASMLVRLGSDSEQVAHAVIDAMKVMVQQTLQVIGALVVMLWYSWTVTLAILLVAPLLAWVMQRVAKRYRRISHHIQESNAQLMQAADQALSNYQDVKVYAAQESELERYARLANINLGLAVKVESTRSISSAAVQLLGAVGLAMLLLIAGHEALAGRLSPGDFVSLMTSMIAVIPALKQLTNVQNMLQSGIASAQRLFSVLDSPDELDTGRRPLGRARGLIEFRGITARYPGRSAPVLDSVSFVAAPGTVTAIVGRSGSGKSSLIKLIPRFYEPESGQILLDGHPLQDYLLADLRRQIALVGQQVMLFDGSIADNIAYGEMRQVVSEEIERVVVDANAQDFVNQLPEGLQFQVGVKGGRLSGGQRQRLAIARAMLKDAPILILDEATAALDNESERLVQDALQRLMPERTTLVIAHRLSTIKHADQVLVMDQGRIIESGTHVDLLARDGLYAYLYSMQFRERPT.

Transmembrane regions (helical) follow at residues tryptophan 29–leucine 49, alanine 68–isoleucine 88, valine 157–leucine 177, isoleucine 254–alanine 274, and leucine 283–lysine 303. Residues valine 32–serine 314 enclose the ABC transmembrane type-1 domain. An ABC transporter domain is found at isoleucine 346–methionine 582. Glycine 380–serine 387 is an ATP binding site.

The protein belongs to the ABC transporter superfamily. Lipid exporter (TC 3.A.1.106) family. Homodimer.

It is found in the cell inner membrane. The enzyme catalyses ATP + H2O + lipid A-core oligosaccharideSide 1 = ADP + phosphate + lipid A-core oligosaccharideSide 2.. Its function is as follows. Involved in lipopolysaccharide (LPS) biosynthesis. Translocates lipid A-core from the inner to the outer leaflet of the inner membrane. Transmembrane domains (TMD) form a pore in the inner membrane and the ATP-binding domain (NBD) is responsible for energy generation. The protein is ATP-dependent lipid A-core flippase of Xylella fastidiosa (strain Temecula1 / ATCC 700964).